Consider the following 100-residue polypeptide: Protein RnfH (100 aa).

Belongs to the UPF0125 (RnfH) family.

This Pseudomonas paraeruginosa (strain DSM 24068 / PA7) (Pseudomonas aeruginosa (strain PA7)) protein is Protein RnfH.